The primary structure comprises 43 residues: Protein PsbN (43 aa).

The chain crosses the membrane as a helical span at residues 5 to 27 (TLVAISISGLLVSFTGYALYTAF).

This sequence belongs to the PsbN family.

It localises to the plastid. The protein resides in the chloroplast thylakoid membrane. May play a role in photosystem I and II biogenesis. In Eucalyptus globulus subsp. globulus (Tasmanian blue gum), this protein is Protein PsbN.